The chain runs to 235 residues: Secretory carrier-associated membrane protein 5 (235 aa).

Over 1-39 (MAEKVNNFPPLPKFIPLKPCFYQDFEADIPPQHVSMTKR) the chain is Cytoplasmic. The helical transmembrane segment at 40 to 60 (LYYLWMLNSVTLAVNLVGCLA) threads the bilayer. Residues 61-67 (WLIGGGG) are Extracellular-facing. A helical membrane pass occupies residues 68–88 (ATNFGLAFLWLILFTPCSYVC). At 89 to 102 (WFRPIYKAFKTDSS) the chain is on the cytoplasmic side. Residues 103–125 (FSFMAFFFTFMAQLVISIIQAVG) traverse the membrane as a helical segment. Over 126–148 (IPGWGVCGWIATISFFGTNIGSA) the chain is Extracellular. A helical transmembrane segment spans residues 149-169 (VVMLIPTVMFTVMAVFSFIAL). The Cytoplasmic segment spans residues 170–235 (SMVHKFYRGS…TPNYTYSNEM (66 aa)).

The protein belongs to the SCAMP family. SCAMP5 subfamily. As to quaternary structure, interacts (via C-terminal part) with SYT1 and SYT2; interaction with synaptotagmins making a link with the SNARE molecules. Interacts with SLC9A7. Expressed both by neuronal and non-neuronal tissues. Expressed in brain, stomach, thyroid, spinal cord, lymph node, trachea, adrenal gland, bone marrow and in the different parts of brain. In thyroid tissues, it is expressed by the follicular epithelial cells. In the adrenal gland tissues it is detected in the zona fasciculata of the cortex region (at protein level).

The protein localises to the cell membrane. Its subcellular location is the golgi apparatus membrane. It is found in the golgi apparatus. The protein resides in the trans-Golgi network membrane. It localises to the recycling endosome membrane. The protein localises to the cytoplasmic vesicle. Its subcellular location is the secretory vesicle. It is found in the synaptic vesicle membrane. Required for the calcium-dependent exocytosis of signal sequence-containing cytokines such as CCL5. Probably acts in cooperation with the SNARE machinery. May play a role in accumulation of expanded polyglutamine (polyQ) protein huntingtin (HTT) in case of endoplasmic reticulum stress by inhibiting the endocytosis pathway. The protein is Secretory carrier-associated membrane protein 5 (SCAMP5) of Homo sapiens (Human).